The following is a 79-amino-acid chain: Cytochrome b (79 aa).

A run of 3 helical transmembrane segments spans residues 1-7, 31-52, and 67-79; these read TAMFLAM, WLIRNMHANGASFFFICIYLHI, and WNVGVILLLLTMM. His-37 and His-51 together coordinate heme b.

The protein belongs to the cytochrome b family. In terms of assembly, the cytochrome bc1 complex contains 3 respiratory subunits (MT-CYB, CYC1 and UQCRFS1), 2 core proteins (UQCRC1 and UQCRC2) and probably 6 low-molecular weight proteins. Heme b is required as a cofactor.

The protein resides in the mitochondrion inner membrane. Its function is as follows. Component of the ubiquinol-cytochrome c reductase complex (complex III or cytochrome b-c1 complex) that is part of the mitochondrial respiratory chain. The b-c1 complex mediates electron transfer from ubiquinol to cytochrome c. Contributes to the generation of a proton gradient across the mitochondrial membrane that is then used for ATP synthesis. In Hypsophrys nicaraguensis (Moga), this protein is Cytochrome b (mt-cyb).